Consider the following 268-residue polypeptide: Homeobox protein CDX-1 (268 aa).

The disordered stretch occupies residues 1–152 (MYVGYVLDKD…AGGGGSGKTR (152 aa)). Composition is skewed to pro residues over residues 29 to 42 (TYAPPGPAPAPPQY) and 54 to 67 (APAPPPTWAAPFPA). The span at 73-91 (AAAYGPGPTASAASPAPLA) shows a compositional bias: low complexity. The segment covering 92-108 (FGPPPDFSPVPAPPGPG) has biased composition (pro residues). The segment covering 115-128 (SLGAPGAPSSPGAP) has biased composition (low complexity). The segment at residues 154–213 (KDKYRVVYTDHQRLELEKEFHYSRYITIRRKSELAANLGLTERQVKIWFQNRRAKERKVN) is a DNA-binding region (homeobox). The tract at residues 157–178 (YRVVYTDHQRLELEKEFHYSRY) is interaction with DNA. Positions 196–207 (RQVKIWFQNRRA) are interaction with 5-mCpG DNA. A disordered region spans residues 209–268 (ERKVNKKKQQQQQPLPPTQLPLPLDGTPTPSGPPLGSLCPTNAGLLGTPSPVPVKEEFLP). Positions 229 to 246 (PLPLDGTPTPSGPPLGSL) are enriched in low complexity.

The protein belongs to the Caudal homeobox family. Intestinal epithelium.

The protein resides in the nucleus. Functionally, plays a role in transcriptional regulation. Involved in activated KRAS-mediated transcriptional activation of PRKD1 in colorectal cancer (CRC) cells. Binds to the PRKD1 promoter in colorectal cancer (CRC) cells. Could play a role in the terminal differentiation of the intestine. Binds preferentially to methylated DNA. This chain is Homeobox protein CDX-1 (Cdx1), found in Mus musculus (Mouse).